The sequence spans 737 residues: Catalase-peroxidase (737 aa).

Positions 102-225 form a cross-link, tryptophyl-tyrosyl-methioninium (Trp-Tyr) (with M-251); that stretch reads WHSAGTYRTG…LGAVQMGLIY (124 aa). The active-site Proton acceptor is the His103. A cross-link (tryptophyl-tyrosyl-methioninium (Tyr-Met) (with W-102)) is located at residues 225 to 251; it reads YVNPEGPNGKPDPLAAAHDIRETFARM. His266 contacts heme b.

This sequence belongs to the peroxidase family. Peroxidase/catalase subfamily. Homodimer or homotetramer. Heme b serves as cofactor. Formation of the three residue Trp-Tyr-Met cross-link is important for the catalase, but not the peroxidase activity of the enzyme.

It carries out the reaction H2O2 + AH2 = A + 2 H2O. The enzyme catalyses 2 H2O2 = O2 + 2 H2O. In terms of biological role, bifunctional enzyme with both catalase and broad-spectrum peroxidase activity. The sequence is that of Catalase-peroxidase from Caulobacter sp. (strain K31).